The following is a 352-amino-acid chain: DNA polymerase IV (352 aa).

One can recognise a UmuC domain in the interval 4 to 185; it reads IIHVDMDCFF…LPLSKIPGVG (182 aa). 2 residues coordinate Mg(2+): Asp-8 and Asp-103. Glu-104 is a catalytic residue.

The protein belongs to the DNA polymerase type-Y family. As to quaternary structure, monomer. Requires Mg(2+) as cofactor.

Its subcellular location is the cytoplasm. The enzyme catalyses DNA(n) + a 2'-deoxyribonucleoside 5'-triphosphate = DNA(n+1) + diphosphate. In terms of biological role, poorly processive, error-prone DNA polymerase involved in untargeted mutagenesis. Copies undamaged DNA at stalled replication forks, which arise in vivo from mismatched or misaligned primer ends. These misaligned primers can be extended by PolIV. Exhibits no 3'-5' exonuclease (proofreading) activity. May be involved in translesional synthesis, in conjunction with the beta clamp from PolIII. This chain is DNA polymerase IV, found in Enterobacter sp. (strain 638).